The following is an 83-amino-acid chain: MAAGSTGERPFFEIITSIRYWVIHAVTLPAIFLAGFLFVSTGLAYDAFGTPRPDSYFQAADVKAPVVSQRYEGKSQLDTRLKN.

Residues 22–36 (VIHAVTLPAIFLAGF) traverse the membrane as a helical segment. Heme is bound at residue His-24.

Belongs to the PsbE/PsbF family. Heterodimer of an alpha subunit and a beta subunit. PSII is composed of 1 copy each of membrane proteins PsbA, PsbB, PsbC, PsbD, PsbE, PsbF, PsbH, PsbI, PsbJ, PsbK, PsbL, PsbM, PsbT, PsbX, PsbY, PsbZ, Psb30/Ycf12, peripheral proteins PsbO, CyanoQ (PsbQ), PsbU, PsbV and a large number of cofactors. It forms dimeric complexes. Heme b is required as a cofactor.

The protein localises to the cellular thylakoid membrane. This b-type cytochrome is tightly associated with the reaction center of photosystem II (PSII). PSII is a light-driven water:plastoquinone oxidoreductase that uses light energy to abstract electrons from H(2)O, generating O(2) and a proton gradient subsequently used for ATP formation. It consists of a core antenna complex that captures photons, and an electron transfer chain that converts photonic excitation into a charge separation. This is Cytochrome b559 subunit alpha from Synechococcus sp. (strain RCC307).